The following is a 404-amino-acid chain: MALRTIDSLGDLRGRRVIVRCDLNVPLKGGVIGDDGRIRASLGTLTGLREAGARVIVISHLGRPDGTPDEKYSLRPVAARLGELLRADVAFADDTVGDSARAAVEALGDGDVVVLENLRFHAEETSKDETVRRGFAESIAELGDAFVSDGFGVVHRKQASVFELAQALPSAAGSLIASELEVLDRLTENPERPYTVVLGGSKVSDKLGVIGHLLPRVDSLLIGGGMLFTFLKAQGHEVGASLLEEDQVETVKGYLAEAEERGVKIVLPTDVVVADGFSADAAHEVTRADAIEGTPAGAKGLGLDIGPETADAFATIIRGSTTVFWNGPMGVFELEPFAAGTKTVADALTRVEGLSVVGGGDSAAAVRALGFDDDRFGHISTGGGASLEFLEGKRLPGLEVLGWQ.

Substrate is bound by residues 22–24 (DLN), R37, 60–63 (HLGR), R119, and R156. ATP-binding positions include K206, G302, E333, and 359–362 (GGDS).

This sequence belongs to the phosphoglycerate kinase family. As to quaternary structure, monomer.

The protein localises to the cytoplasm. The enzyme catalyses (2R)-3-phosphoglycerate + ATP = (2R)-3-phospho-glyceroyl phosphate + ADP. It participates in carbohydrate degradation; glycolysis; pyruvate from D-glyceraldehyde 3-phosphate: step 2/5. The chain is Phosphoglycerate kinase from Clavibacter sepedonicus (Clavibacter michiganensis subsp. sepedonicus).